An 881-amino-acid polypeptide reads, in one-letter code: Alanine--tRNA ligase (881 aa).

Residues histidine 566, histidine 570, cysteine 668, and histidine 672 each contribute to the Zn(2+) site.

The protein belongs to the class-II aminoacyl-tRNA synthetase family. The cofactor is Zn(2+).

Its subcellular location is the cytoplasm. It catalyses the reaction tRNA(Ala) + L-alanine + ATP = L-alanyl-tRNA(Ala) + AMP + diphosphate. Functionally, catalyzes the attachment of alanine to tRNA(Ala) in a two-step reaction: alanine is first activated by ATP to form Ala-AMP and then transferred to the acceptor end of tRNA(Ala). Also edits incorrectly charged Ser-tRNA(Ala) and Gly-tRNA(Ala) via its editing domain. The chain is Alanine--tRNA ligase from Frankia alni (strain DSM 45986 / CECT 9034 / ACN14a).